A 311-amino-acid polypeptide reads, in one-letter code: Dihydroorotate dehydrogenase B (NAD(+)), catalytic subunit (311 aa).

FMN contacts are provided by residues S24 and 48-49; that span reads KA. Substrate contacts are provided by residues K48 and 72-76; that span reads NAIGL. The FMN site is built by N104 and N132. Position 132 (N132) interacts with substrate. The active-site Nucleophile is the C135. FMN is bound by residues K170 and I196. Substrate is bound at residue 197–198; sequence NT. FMN contacts are provided by residues G222, 248 to 249, and 270 to 271; these read GG and GT.

This sequence belongs to the dihydroorotate dehydrogenase family. Type 1 subfamily. As to quaternary structure, heterotetramer of 2 PyrK and 2 PyrD type B subunits. It depends on FMN as a cofactor.

It is found in the cytoplasm. It catalyses the reaction (S)-dihydroorotate + NAD(+) = orotate + NADH + H(+). It functions in the pathway pyrimidine metabolism; UMP biosynthesis via de novo pathway; orotate from (S)-dihydroorotate (NAD(+) route): step 1/1. Functionally, catalyzes the conversion of dihydroorotate to orotate with NAD(+) as electron acceptor. This chain is Dihydroorotate dehydrogenase B (NAD(+)), catalytic subunit (pyrDB), found in Lactococcus lactis subsp. lactis (strain IL1403) (Streptococcus lactis).